Reading from the N-terminus, the 36-residue chain is Fructose-1,6-/sedoheptulose-1,7-bisphosphate aldolase (36 aa).

The chain is Fructose-1,6-/sedoheptulose-1,7-bisphosphate aldolase (cbbA) from Nitrobacter vulgaris.